The sequence spans 200 residues: Anthranilate synthase component 2 (200 aa).

The Glutamine amidotransferase type-1 domain maps to 3-196 (NILLLDNIDS…IHWASLKYIT (194 aa)). An L-glutamine-binding site is contributed by 57 to 59 (GPS). C84 acts as the Nucleophile; for GATase activity in catalysis. L-glutamine contacts are provided by residues Q88 and 134–135 (SL). Catalysis depends on for GATase activity residues H170 and E172.

Heterotetramer consisting of two non-identical subunits: a beta subunit (TrpG) and a large alpha subunit (TrpE).

It catalyses the reaction chorismate + L-glutamine = anthranilate + pyruvate + L-glutamate + H(+). It participates in amino-acid biosynthesis; L-tryptophan biosynthesis; L-tryptophan from chorismate: step 1/5. Functionally, part of a heterotetrameric complex that catalyzes the two-step biosynthesis of anthranilate, an intermediate in the biosynthesis of L-tryptophan. In the first step, the glutamine-binding beta subunit (TrpG) of anthranilate synthase (AS) provides the glutamine amidotransferase activity which generates ammonia as a substrate that, along with chorismate, is used in the second step, catalyzed by the large alpha subunit of AS (TrpE) to produce anthranilate. In the absence of TrpG, TrpE can synthesize anthranilate directly from chorismate and high concentrations of ammonia. This is Anthranilate synthase component 2 (trpG) from Buchnera aphidicola subsp. Acyrthosiphon pisum (strain APS) (Acyrthosiphon pisum symbiotic bacterium).